We begin with the raw amino-acid sequence, 297 residues long: Light-independent protochlorophyllide reductase iron-sulfur ATP-binding protein (297 aa).

ATP is bound by residues 41 to 46 (GIGKST) and Lys-70. Residue Ser-45 coordinates Mg(2+). Positions 126 and 160 each coordinate [4Fe-4S] cluster. Residues 211–212 (NR) and 235–237 (PDL) each bind ATP.

It belongs to the NifH/BchL/ChlL family. As to quaternary structure, homodimer. Protochlorophyllide reductase is composed of three subunits; BchL, BchN and BchB. [4Fe-4S] cluster serves as cofactor.

The catalysed reaction is chlorophyllide a + oxidized 2[4Fe-4S]-[ferredoxin] + 2 ADP + 2 phosphate = protochlorophyllide a + reduced 2[4Fe-4S]-[ferredoxin] + 2 ATP + 2 H2O. It participates in porphyrin-containing compound metabolism; bacteriochlorophyll biosynthesis (light-independent). In terms of biological role, component of the dark-operative protochlorophyllide reductase (DPOR) that uses Mg-ATP and reduced ferredoxin to reduce ring D of protochlorophyllide (Pchlide) to form chlorophyllide a (Chlide). This reaction is light-independent. The L component serves as a unique electron donor to the NB-component of the complex, and binds Mg-ATP. The protein is Light-independent protochlorophyllide reductase iron-sulfur ATP-binding protein of Methylorubrum populi (strain ATCC BAA-705 / NCIMB 13946 / BJ001) (Methylobacterium populi).